The primary structure comprises 103 residues: Large ribosomal subunit protein bL21 (103 aa).

Belongs to the bacterial ribosomal protein bL21 family. Part of the 50S ribosomal subunit. Contacts protein L20.

In terms of biological role, this protein binds to 23S rRNA in the presence of protein L20. The protein is Large ribosomal subunit protein bL21 of Variovorax paradoxus (strain S110).